The following is a 278-amino-acid chain: 4-hydroxy-tetrahydrodipicolinate reductase (278 aa).

NAD(+) contacts are provided by residues Gly13–Met18 and Gly111–Thr113. His167 serves as the catalytic Proton donor/acceptor. Residue His168 coordinates (S)-2,3,4,5-tetrahydrodipicolinate. Lys171 acts as the Proton donor in catalysis. Gly177–Thr178 serves as a coordination point for (S)-2,3,4,5-tetrahydrodipicolinate.

It belongs to the DapB family.

Its subcellular location is the cytoplasm. The enzyme catalyses (S)-2,3,4,5-tetrahydrodipicolinate + NAD(+) + H2O = (2S,4S)-4-hydroxy-2,3,4,5-tetrahydrodipicolinate + NADH + H(+). It catalyses the reaction (S)-2,3,4,5-tetrahydrodipicolinate + NADP(+) + H2O = (2S,4S)-4-hydroxy-2,3,4,5-tetrahydrodipicolinate + NADPH + H(+). It participates in amino-acid biosynthesis; L-lysine biosynthesis via DAP pathway; (S)-tetrahydrodipicolinate from L-aspartate: step 4/4. Its function is as follows. Catalyzes the conversion of 4-hydroxy-tetrahydrodipicolinate (HTPA) to tetrahydrodipicolinate. In Nostoc punctiforme (strain ATCC 29133 / PCC 73102), this protein is 4-hydroxy-tetrahydrodipicolinate reductase.